We begin with the raw amino-acid sequence, 124 residues long: Type-4 ice-structuring protein (124 aa).

The signal sequence occupies residues 1-20; that stretch reads MKFSLIAAVALLALAQGSFA. At Q21 the chain carries Pyrrolidone carboxylic acid.

Belongs to the apolipoprotein A1/A4/E family.

Its subcellular location is the secreted. Antifreeze proteins lower the blood freezing point. The protein is Type-4 ice-structuring protein of Paralichthys olivaceus (Bastard halibut).